A 445-amino-acid chain; its full sequence is Amino-acid acetyltransferase (445 aa).

Residues 299–438 form the N-acetyltransferase domain; it reads EQVRQAQIDD…QGLYNYQRNS (140 aa).

The protein belongs to the acetyltransferase family. ArgA subfamily.

It localises to the cytoplasm. The catalysed reaction is L-glutamate + acetyl-CoA = N-acetyl-L-glutamate + CoA + H(+). It functions in the pathway amino-acid biosynthesis; L-arginine biosynthesis; N(2)-acetyl-L-ornithine from L-glutamate: step 1/4. The polypeptide is Amino-acid acetyltransferase (Vibrio atlanticus (strain LGP32) (Vibrio splendidus (strain Mel32))).